We begin with the raw amino-acid sequence, 498 residues long: MGKYVVALDQGTTSSRAIIFDKEQNIVGVSQKEFTQIYPHEGWVEHNPLEIWSSQYGVLQEVLAKTNVTADEISAIGITNQRETTIVWDKNTGEPVYNAIVWQCRRTASIVDELKKDDEFAEYVKANTGLLLDAYFSGTKIKWILDNVEGAREKAEKGDLLFGTVDTWLVWKLTNGKVHVTDYTNASRTMLYNIKELRWDEKIINKLGIPTSMLPEVKNSSEVYGHTNLGGVGGVRVPISGMAGDQQCALFGQTCFEKGSAKNTYGTGCFLLMNTGEDMVLSKNGLVTTIAVGINDKIEYALEGSVFVGGAVIQWVRDELQFIHDAADSEYFAKKVEDNGGVYVVPAFVGLGAPYWDMYARGAIFGLTRGANRNHIIRAALESIAYQTNDLLTAMAEDAGCKLASLRVDGGASRNDLLMQFQADISNTQVLRPIITETTALGAAYLAGLAVGFWESKEEIATKWAISKSYGPTFERAKREKLNKGWKNAVSRVKGWAE.

Threonine 12 contacts ADP. Positions 12, 13, and 14 each coordinate ATP. A sn-glycerol 3-phosphate-binding site is contributed by threonine 12. Arginine 16 contributes to the ADP binding site. Positions 82, 83, 135, and 245 each coordinate sn-glycerol 3-phosphate. The glycerol site is built by arginine 82, glutamate 83, tyrosine 135, aspartate 245, and glutamine 246. 2 residues coordinate ADP: threonine 267 and glycine 310. 4 residues coordinate ATP: threonine 267, glycine 310, glutamine 314, and glycine 411. ADP is bound by residues glycine 411 and asparagine 415.

Belongs to the FGGY kinase family. Homotetramer and homodimer (in equilibrium).

It carries out the reaction glycerol + ATP = sn-glycerol 3-phosphate + ADP + H(+). Its pathway is polyol metabolism; glycerol degradation via glycerol kinase pathway; sn-glycerol 3-phosphate from glycerol: step 1/1. Its activity is regulated as follows. Activated by phosphorylation and inhibited by fructose 1,6-bisphosphate (FBP). Functionally, key enzyme in the regulation of glycerol uptake and metabolism. Catalyzes the phosphorylation of glycerol to yield sn-glycerol 3-phosphate. The chain is Glycerol kinase from Clostridium botulinum (strain Eklund 17B / Type B).